We begin with the raw amino-acid sequence, 178 residues long: ATP synthase subunit b, chloroplastic (178 aa).

A helical transmembrane segment spans residues 23-43 (IFETNIINLAAVVAIVISFVG).

It belongs to the ATPase B chain family. In terms of assembly, F-type ATPases have 2 components, F(1) - the catalytic core - and F(0) - the membrane proton channel. F(1) has five subunits: alpha(3), beta(3), gamma(1), delta(1), epsilon(1). F(0) has four main subunits: a(1), b(1), b'(1) and c(10-14). The alpha and beta chains form an alternating ring which encloses part of the gamma chain. F(1) is attached to F(0) by a central stalk formed by the gamma and epsilon chains, while a peripheral stalk is formed by the delta, b and b' chains.

It is found in the plastid. It localises to the chloroplast thylakoid membrane. In terms of biological role, f(1)F(0) ATP synthase produces ATP from ADP in the presence of a proton or sodium gradient. F-type ATPases consist of two structural domains, F(1) containing the extramembraneous catalytic core and F(0) containing the membrane proton channel, linked together by a central stalk and a peripheral stalk. During catalysis, ATP synthesis in the catalytic domain of F(1) is coupled via a rotary mechanism of the central stalk subunits to proton translocation. Component of the F(0) channel, it forms part of the peripheral stalk, linking F(1) to F(0). The protein is ATP synthase subunit b, chloroplastic of Tetradesmus obliquus (Green alga).